A 317-amino-acid chain; its full sequence is Beta-ketoacyl-[acyl-carrier-protein] synthase III (317 aa).

Active-site residues include Cys-112 and His-244. Residues 245 to 249 (QANLR) are ACP-binding. Asn-274 is an active-site residue.

Belongs to the thiolase-like superfamily. FabH family. As to quaternary structure, homodimer.

It localises to the cytoplasm. It catalyses the reaction malonyl-[ACP] + acetyl-CoA + H(+) = 3-oxobutanoyl-[ACP] + CO2 + CoA. Its pathway is lipid metabolism; fatty acid biosynthesis. Its function is as follows. Catalyzes the condensation reaction of fatty acid synthesis by the addition to an acyl acceptor of two carbons from malonyl-ACP. Catalyzes the first condensation reaction which initiates fatty acid synthesis and may therefore play a role in governing the total rate of fatty acid production. Possesses both acetoacetyl-ACP synthase and acetyl transacylase activities. Its substrate specificity determines the biosynthesis of branched-chain and/or straight-chain of fatty acids. The sequence is that of Beta-ketoacyl-[acyl-carrier-protein] synthase III from Blochmanniella pennsylvanica (strain BPEN).